Here is a 264-residue protein sequence, read N- to C-terminus: tRNA (guanine-N(1)-)-methyltransferase (264 aa).

149-154 (IGDYVL) is an S-adenosyl-L-methionine binding site.

The protein belongs to the RNA methyltransferase TrmD family. In terms of assembly, homodimer.

The protein resides in the cytoplasm. The enzyme catalyses guanosine(37) in tRNA + S-adenosyl-L-methionine = N(1)-methylguanosine(37) in tRNA + S-adenosyl-L-homocysteine + H(+). Specifically methylates guanosine-37 in various tRNAs. This Methylobacillus flagellatus (strain ATCC 51484 / DSM 6875 / VKM B-1610 / KT) protein is tRNA (guanine-N(1)-)-methyltransferase.